The sequence spans 689 residues: E3 ubiquitin-protein ligase RNF43 (689 aa).

Residues 1–27 (MNRARLQLASLWLLLTVTLQAVASAMG) form the signal peptide. The Extracellular segment spans residues 28–191 (TTEREMDVKA…VQEQPKWLHH (164 aa)). N-linked (GlcNAc...) asparagine glycosylation is found at asparagine 56 and asparagine 86. Cysteines 85 and 113 form a disulfide. Residues 192–212 (DIWILLTVAGTVMFFVLYAVA) form a helical membrane-spanning segment. Residues 213–689 (RLLCRQPPPQ…EIEAVCEHAV (477 aa)) lie on the Cytoplasmic side of the membrane. The RING-type; atypical zinc-finger motif lies at 268-308 (CAICLEEFTDGQELRILPCCHEYHLGCVDPWLRQNHTCPLC). Disordered regions lie at residues 386 to 430 (QMRT…HGSS), 445 to 467 (TSSS…ALAS), and 492 to 639 (VHFH…MSES). 2 stretches are compositionally biased toward low complexity: residues 408 to 430 (DSSG…HGSS) and 446 to 461 (SSSS…EDSS). 2 stretches are compositionally biased toward basic residues: residues 492 to 504 (VHFH…HYRR) and 512 to 523 (SHPHRSKRRTKV). Residues 574–588 (QQSMPQAASVVQGSS) show a composition bias toward polar residues.

It belongs to the ZNRF3 family.

It localises to the cell membrane. The protein localises to the endoplasmic reticulum membrane. It is found in the nucleus envelope. It carries out the reaction S-ubiquitinyl-[E2 ubiquitin-conjugating enzyme]-L-cysteine + [acceptor protein]-L-lysine = [E2 ubiquitin-conjugating enzyme]-L-cysteine + N(6)-ubiquitinyl-[acceptor protein]-L-lysine.. Its pathway is protein modification; protein ubiquitination. In terms of biological role, E3 ubiquitin-protein ligase that acts as a negative regulator of the Wnt signaling pathway by mediating the ubiquitination, endocytosis and subsequent degradation of Wnt receptor complex components Frizzled. Acts on both canonical and non-canonical Wnt signaling pathway. Along with RSPO2 and ZNRF3, constitutes a master switch that governs limb specification. The protein is E3 ubiquitin-protein ligase RNF43 (rnf43) of Xenopus tropicalis (Western clawed frog).